We begin with the raw amino-acid sequence, 69 residues long: Protein SlyX homolog (69 aa).

This sequence belongs to the SlyX family.

The sequence is that of Protein SlyX homolog from Pseudomonas paraeruginosa (strain DSM 24068 / PA7) (Pseudomonas aeruginosa (strain PA7)).